Here is a 432-residue protein sequence, read N- to C-terminus: Ornithine decarboxylase (432 aa).

K98 is subject to N6-(pyridoxal phosphate)lysine. Pyridoxal 5'-phosphate is bound by residues S229, G266, and 296–299 (EPGR). A substrate-binding site is contributed by 341 to 342 (FD). Catalysis depends on C377, which acts as the Proton donor; shared with dimeric partner. A substrate-binding site is contributed by D378. Y407 contacts pyridoxal 5'-phosphate.

This sequence belongs to the Orn/Lys/Arg decarboxylase class-II family. In terms of assembly, homodimer. Only the dimer is catalytically active, as the active sites are constructed of residues from both monomers. The cofactor is pyridoxal 5'-phosphate.

It is found in the cytoplasm. It catalyses the reaction L-ornithine + H(+) = putrescine + CO2. It functions in the pathway amine and polyamine biosynthesis; putrescine biosynthesis via L-ornithine pathway; putrescine from L-ornithine: step 1/1. Inhibited by antizyme (AZ) OAZ1 in response to polyamine levels. AZ inhibits the assembly of the functional homodimer by binding to ODC monomers and targeting them for ubiquitin-independent proteolytic destruction by the 26S proteasome. Its function is as follows. Catalyzes the first and rate-limiting step of polyamine biosynthesis that converts ornithine into putrescine, which is the precursor for the polyamines, spermidine and spermine. Polyamines are essential for cell proliferation and are implicated in cellular processes, ranging from DNA replication to apoptosis. This chain is Ornithine decarboxylase (spe1), found in Schizosaccharomyces pombe (strain 972 / ATCC 24843) (Fission yeast).